The primary structure comprises 122 residues: Large ribosomal subunit protein uL14 (122 aa).

Belongs to the universal ribosomal protein uL14 family. In terms of assembly, part of the 50S ribosomal subunit. Forms a cluster with proteins L3 and L19. In the 70S ribosome, L14 and L19 interact and together make contacts with the 16S rRNA in bridges B5 and B8.

Its function is as follows. Binds to 23S rRNA. Forms part of two intersubunit bridges in the 70S ribosome. This Desulfatibacillum aliphaticivorans protein is Large ribosomal subunit protein uL14.